We begin with the raw amino-acid sequence, 150 residues long: MEKKVEFLWLEGRETETLSLPAYETEGAAGMDVAACLDADCTIEPGDIVLIPTGFALAIPTGYEIQVRPRSGLAIKHGLTVVNAPGTIDADYRGEVGVGLINLGRQAVTIHHGDRIAQLVLAPVLQARWTVVTELEATERGAGGFGHTGV.

Substrate is bound by residues 70–72, N83, and 87–89; these read RSG and TID.

The protein belongs to the dUTPase family. Requires Mg(2+) as cofactor.

The enzyme catalyses dUTP + H2O = dUMP + diphosphate + H(+). It participates in pyrimidine metabolism; dUMP biosynthesis; dUMP from dCTP (dUTP route): step 2/2. In terms of biological role, this enzyme is involved in nucleotide metabolism: it produces dUMP, the immediate precursor of thymidine nucleotides and it decreases the intracellular concentration of dUTP so that uracil cannot be incorporated into DNA. This Desulfotalea psychrophila (strain LSv54 / DSM 12343) protein is Deoxyuridine 5'-triphosphate nucleotidohydrolase.